We begin with the raw amino-acid sequence, 525 residues long: 2,3-bisphosphoglycerate-independent phosphoglycerate mutase (525 aa).

Mn(2+)-binding residues include D18 and S68. S68 functions as the Phosphoserine intermediate in the catalytic mechanism. Substrate contacts are provided by residues H129, 159 to 160, R194, R200, 269 to 272, and K345; these read RD and RADR. The Mn(2+) site is built by D413, H417, D454, H455, and H473.

Belongs to the BPG-independent phosphoglycerate mutase family. In terms of assembly, monomer. Requires Mn(2+) as cofactor.

It catalyses the reaction (2R)-2-phosphoglycerate = (2R)-3-phosphoglycerate. It functions in the pathway carbohydrate degradation; glycolysis; pyruvate from D-glyceraldehyde 3-phosphate: step 3/5. Catalyzes the interconversion of 2-phosphoglycerate and 3-phosphoglycerate. This chain is 2,3-bisphosphoglycerate-independent phosphoglycerate mutase, found in Chromohalobacter salexigens (strain ATCC BAA-138 / DSM 3043 / CIP 106854 / NCIMB 13768 / 1H11).